The primary structure comprises 225 residues: tRNA (guanine-N(7)-)-methyltransferase (225 aa).

Residues E56, E81, D108, and D131 each coordinate S-adenosyl-L-methionine. The active site involves D131. Residues K135, D167, and 204–207 (TKFE) contribute to the substrate site.

The protein belongs to the class I-like SAM-binding methyltransferase superfamily. TrmB family.

It carries out the reaction guanosine(46) in tRNA + S-adenosyl-L-methionine = N(7)-methylguanosine(46) in tRNA + S-adenosyl-L-homocysteine. It functions in the pathway tRNA modification; N(7)-methylguanine-tRNA biosynthesis. Catalyzes the formation of N(7)-methylguanine at position 46 (m7G46) in tRNA. This Legionella pneumophila (strain Lens) protein is tRNA (guanine-N(7)-)-methyltransferase.